Reading from the N-terminus, the 315-residue chain is Ribonuclease Z (315 aa).

7 residues coordinate Zn(2+): His-62, His-64, Asp-66, His-67, His-144, Asp-215, and His-273. Asp-66 serves as the catalytic Proton acceptor.

This sequence belongs to the RNase Z family. In terms of assembly, homodimer. Requires Zn(2+) as cofactor.

The catalysed reaction is Endonucleolytic cleavage of RNA, removing extra 3' nucleotides from tRNA precursor, generating 3' termini of tRNAs. A 3'-hydroxy group is left at the tRNA terminus and a 5'-phosphoryl group is left at the trailer molecule.. Its function is as follows. Zinc phosphodiesterase, which displays some tRNA 3'-processing endonuclease activity. Probably involved in tRNA maturation, by removing a 3'-trailer from precursor tRNA. The polypeptide is Ribonuclease Z (Synechococcus sp. (strain CC9311)).